The sequence spans 119 residues: Small ribosomal subunit protein uS13 (119 aa).

Residues 94–113 (GLPVRGQRTKTNARTRKGPR) are compositionally biased toward basic residues. The interval 94-119 (GLPVRGQRTKTNARTRKGPRKAIGAK) is disordered.

The protein belongs to the universal ribosomal protein uS13 family. Part of the 30S ribosomal subunit. Forms a loose heterodimer with protein S19. Forms two bridges to the 50S subunit in the 70S ribosome.

Functionally, located at the top of the head of the 30S subunit, it contacts several helices of the 16S rRNA. In the 70S ribosome it contacts the 23S rRNA (bridge B1a) and protein L5 of the 50S subunit (bridge B1b), connecting the 2 subunits; these bridges are implicated in subunit movement. Contacts the tRNAs in the A and P-sites. The polypeptide is Small ribosomal subunit protein uS13 (Nitrosomonas europaea (strain ATCC 19718 / CIP 103999 / KCTC 2705 / NBRC 14298)).